Consider the following 290-residue polypeptide: Endo-1,4-beta-xylanase B (290 aa).

A signal peptide spans methionine 1–alanine 19. Asparagine 26 carries an N-linked (GlcNAc...) asparagine glycan. The region spanning glutamine 34–asparagine 222 is the GH11 domain. The active-site Nucleophile is the glutamate 118. The active-site Proton donor is glutamate 209. The segment at proline 223–serine 248 is disordered. Over residues threonine 234 to serine 248 the composition is skewed to low complexity. The CBM1 domain occupies threonine 255–leucine 290.

The protein belongs to the glycosyl hydrolase 11 (cellulase G) family.

The protein resides in the secreted. The enzyme catalyses Endohydrolysis of (1-&gt;4)-beta-D-xylosidic linkages in xylans.. It functions in the pathway glycan degradation; xylan degradation. Endo-1,4-beta-xylanase involved in the hydrolysis of xylan, a major structural heterogeneous polysaccharide found in plant biomass representing the second most abundant polysaccharide in the biosphere, after cellulose. The protein is Endo-1,4-beta-xylanase B (xynB) of Phanerodontia chrysosporium (White-rot fungus).